We begin with the raw amino-acid sequence, 217 residues long: Small ribosomal subunit protein uS3 (217 aa).

Residues 38–106 enclose the KH type-2 domain; the sequence is IRKFIQKELA…QVHINIVEIK (69 aa).

Belongs to the universal ribosomal protein uS3 family. As to quaternary structure, part of the 30S ribosomal subunit. Forms a tight complex with proteins S10 and S14.

Functionally, binds the lower part of the 30S subunit head. Binds mRNA in the 70S ribosome, positioning it for translation. The polypeptide is Small ribosomal subunit protein uS3 (Streptococcus thermophilus (strain CNRZ 1066)).